The primary structure comprises 110 residues: Putative protein RIG (110 aa).

In terms of tissue distribution, expressed predominantly in brain and weakly in heart and lung. Expression is reduced or undetectable in cultured glioma cells, primary glioblastoma cells and malignant glioblastoma tumors.

Its function is as follows. May serve as a molecular marker for or play a role in the malignant progression of glioblastomas. The polypeptide is Putative protein RIG (RIG) (Homo sapiens (Human)).